The chain runs to 1441 residues: Receptor-type tyrosine-protein phosphatase T (1441 aa).

An N-terminal signal peptide occupies residues 1 to 25; it reads MASLAALALSLLLRLQLPPLPGARA. Topologically, residues 26-747 are extracellular; that stretch reads QSAAGGCSFD…EKQVDNTVKM (722 aa). Residues 30–191 form the MAM domain; the sequence is GGCSFDEHYS…VRVLAHPCRK (162 aa). Asn78, Asn98, Asn137, and Asn208 each carry an N-linked (GlcNAc...) asparagine glycan. Residues 193–284 form the Ig-like C2-type domain; that stretch reads PHFLRLQNVE…SGVSNYAELI (92 aa). Cys213 and Cys267 are disulfide-bonded. Fibronectin type-III domains are found at residues 291 to 384, 389 to 483, 484 to 590, and 591 to 726; these read PIAP…TKCA, GPQN…TEED, VPGA…SAPS, and MPEY…ATKG. Residues Asn421, Asn510, Asn547, Asn601, Asn654, and Asn684 are each glycosylated (N-linked (GlcNAc...) asparagine). Residues 748-768 form a helical membrane-spanning segment; the sequence is AGVIAGLLMFIIILLGVMLTI. The Cytoplasmic portion of the chain corresponds to 769-1441; it reads KRRRNAYSYS…EVALEYLSSF (673 aa). Positions 790-839 are disordered; that stretch reads TQSGAQREMGPVASADKPTTKLSASRNDEGFSSSSQDVNGFTDGSRGELS. A compositionally biased stretch (polar residues) spans 809–828; that stretch reads TKLSASRNDEGFSSSSQDVN. 2 Tyrosine-protein phosphatase domains span residues 889–1143 and 1175–1437; these read FKEE…ILEA and IKDE…ALEY. Substrate-binding positions include Asp1052, 1084–1090, and Gln1128; that span reads CSAGAGR. Cys1084 functions as the Phosphocysteine intermediate in the catalytic mechanism. Ser1208 is subject to Phosphoserine. Cys1378 (phosphocysteine intermediate) is an active-site residue.

Belongs to the protein-tyrosine phosphatase family. Receptor class 2B subfamily. Expressed in colon, lung, heart and testis, as well as in fetal and adult brain. Not detected in muscle and peripheral blood leukocytes.

The protein resides in the membrane. It catalyses the reaction O-phospho-L-tyrosyl-[protein] + H2O = L-tyrosyl-[protein] + phosphate. Its function is as follows. May be involved in both signal transduction and cellular adhesion in the CNS. This is Receptor-type tyrosine-protein phosphatase T (PTPRT) from Homo sapiens (Human).